We begin with the raw amino-acid sequence, 167 residues long: uncharacterized protein (167 aa).

It localises to the virion. This is an uncharacterized protein from Acanthamoeba polyphaga (Amoeba).